The chain runs to 568 residues: Oxygen-dependent choline dehydrogenase (568 aa).

6-35 (DYIIVGAGSAGCVLADRLSASGEHYILLLE) contributes to the FAD binding site. His470 (proton acceptor) is an active-site residue.

Belongs to the GMC oxidoreductase family. FAD is required as a cofactor.

The catalysed reaction is choline + A = betaine aldehyde + AH2. It catalyses the reaction betaine aldehyde + NAD(+) + H2O = glycine betaine + NADH + 2 H(+). The protein operates within amine and polyamine biosynthesis; betaine biosynthesis via choline pathway; betaine aldehyde from choline (cytochrome c reductase route): step 1/1. Involved in the biosynthesis of the osmoprotectant glycine betaine. Catalyzes the oxidation of choline to betaine aldehyde and betaine aldehyde to glycine betaine at the same rate. In Photobacterium profundum (strain SS9), this protein is Oxygen-dependent choline dehydrogenase.